The sequence spans 440 residues: Tuliposide B-converting enzyme 1, amyloplastic (440 aa).

Residues 1-58 (MSIVSFCSSLPAGPHGFKHGRGTRDMVHMPCIVRRTARSPAQACRLLRWNKYHCAAVP) constitute an amyloplast transit peptide. S232 (acyl-ester intermediate) is an active-site residue. Residues D325 and H357 each act as charge relay system in the active site.

Belongs to the AB hydrolase superfamily. Homodimer. In terms of processing, not glycosylated. As to expression, expressed in the pollen grains.

Its subcellular location is the plastid. It localises to the amyloplast. It catalyses the reaction 6-tuliposide B = tulipalin B + D-glucose. Inhibited by Ag(+), Cu(2+), Fe(2+), Hg(2+), V(3+) and phenylmethylsulfonyl fluoride (PMSF). In terms of biological role, lactone-forming carboxylesterase, specifically catalyzing intramolecular transesterification, but not hydrolysis. Involved in the biosynthesis of tulipalins, defensive chemicals that show antimicrobial activities against a broad range of strains of bacteria and fungi. Substrates are 6-tuliposide B &gt; 6-tuliposide A. The polypeptide is Tuliposide B-converting enzyme 1, amyloplastic (Tulipa gesneriana (Garden tulip)).